The primary structure comprises 462 residues: MELNQIIKSGEKMAVHPIDYRYGTPEMRKVWEEENKLEKMLKVEAALAKAQAELGLIPKEAAEEINKKASTKYVKLERVKEIEKQTKHDVVAMIRALAEVCEGNAGEYIHFGATSNDIVDTANSLLIKESIEIIEDKLKQLRDILLDKAEEHKYTVCVGRTHGQHAIPTTYGMRFALWAAEIDRHLERLKEAKKRICVSMITGAVGTMAAMGEKGLEVHKRVAEILGLEPVLISNQVIQRDRHAEFVFLLALIAQTLNKIGVTVRSMQRTEIGELEEEFDPTKQTGSSTMPHKRNPITFEQICGLSRVIKSLCIAEMDNIPLWEERDLTNSSAERCIFAEVCVLTDHILTLAIKGVKKLKVNKENVERNLELTKGLIMAERIMIELAKRGMGRQTAHEIVRQCAMKAYEEKRHLKDILLENEEVMKYITKEELEELMNPKTYIGLAPQIVDEVIKTLKNKKY.

Residues 21 to 22, 87 to 89, and 114 to 115 each bind N(6)-(1,2-dicarboxyethyl)-AMP; these read RY, KHD, and TS. The Proton donor/acceptor role is filled by His-162. Gln-236 lines the N(6)-(1,2-dicarboxyethyl)-AMP pocket. Catalysis depends on Ser-287, which acts as the Proton donor/acceptor. N(6)-(1,2-dicarboxyethyl)-AMP is bound by residues Ser-288, 293–295, and 332–336; these read KRN and SAERC.

Belongs to the lyase 1 family. Adenylosuccinate lyase subfamily. In terms of assembly, homotetramer. Residues from neighboring subunits contribute catalytic and substrate-binding residues to each active site.

It carries out the reaction N(6)-(1,2-dicarboxyethyl)-AMP = fumarate + AMP. It catalyses the reaction (2S)-2-[5-amino-1-(5-phospho-beta-D-ribosyl)imidazole-4-carboxamido]succinate = 5-amino-1-(5-phospho-beta-D-ribosyl)imidazole-4-carboxamide + fumarate. The protein operates within purine metabolism; AMP biosynthesis via de novo pathway; AMP from IMP: step 2/2. It participates in purine metabolism; IMP biosynthesis via de novo pathway; 5-amino-1-(5-phospho-D-ribosyl)imidazole-4-carboxamide from 5-amino-1-(5-phospho-D-ribosyl)imidazole-4-carboxylate: step 2/2. Its function is as follows. Catalyzes two reactions in de novo purine nucleotide biosynthesis. Catalyzes the breakdown of 5-aminoimidazole- (N-succinylocarboxamide) ribotide (SAICAR or 2-[5-amino-1-(5-phospho-beta-D-ribosyl)imidazole-4-carboxamido]succinate) to 5-aminoimidazole-4-carboxamide ribotide (AICAR or 5-amino-1-(5-phospho-beta-D-ribosyl)imidazole-4-carboxamide) and fumarate, and of adenylosuccinate (ADS or N(6)-(1,2-dicarboxyethyl)-AMP) to adenosine monophosphate (AMP) and fumarate. The sequence is that of Adenylosuccinate lyase (purB) from Methanocaldococcus jannaschii (strain ATCC 43067 / DSM 2661 / JAL-1 / JCM 10045 / NBRC 100440) (Methanococcus jannaschii).